The following is a 328-amino-acid chain: MSSYLEYVSCSSSGGVGGDVLSLAPKFCRSDARPVALQPAFPLGNGDGAFVSCLPLAAARPSPSPPAAPARPSVPPPAAPQYAQCTLEGAYEPGAAPAAAAGGADYGFLGSGPAYDFPGVLGRAADDGGSHVHYATSAVFSGGGSFLLSGQVDYAAFGEPGPFPACLKASADGHPGAFQTASPAPGTYPKSVSPASGLPAAFSTFEWMKVKRNASKKGKLAEYGAASPSSAIRTNFSTKQLTELEKEFHFNKYLTRARRIEIANCLHLNDTQVKIWFQNRRMKQKKREREGLLATAIPVAPLQLPLSGTTPTKFIKNPGSPSQSQEPS.

An Antp-type hexapeptide motif is present at residues 204 to 209 (TFEWMK). Positions 229–288 (SSAIRTNFSTKQLTELEKEFHFNKYLTRARRIEIANCLHLNDTQVKIWFQNRRMKQKKRE) form a DNA-binding region, homeobox. The tract at residues 305–328 (PLSGTTPTKFIKNPGSPSQSQEPS) is disordered. The segment covering 319–328 (GSPSQSQEPS) has biased composition (polar residues).

This sequence belongs to the Antp homeobox family. Labial subfamily.

It localises to the nucleus. Its function is as follows. Sequence-specific transcription factor which is part of a developmental regulatory system that provides cells with specific positional identities on the anterior-posterior axis. Acts on the anterior body structures. This is Homeobox protein Hox-D1 (HOXD1) from Homo sapiens (Human).